Reading from the N-terminus, the 52-residue chain is Superoxide dismutase [Cu-Zn] 2 (52 aa).

Residue His44 coordinates Cu cation.

This sequence belongs to the Cu-Zn superoxide dismutase family. Homodimer. It depends on Cu cation as a cofactor. Zn(2+) serves as cofactor.

The protein resides in the cytoplasm. The enzyme catalyses 2 superoxide + 2 H(+) = H2O2 + O2. Functionally, destroys radicals which are normally produced within the cells and which are toxic to biological systems. The chain is Superoxide dismutase [Cu-Zn] 2 from Debaryomyces hansenii (Yeast).